Reading from the N-terminus, the 553-residue chain is Capsid protein VP1 (553 aa).

The protein belongs to the microviridae F protein family.

Its subcellular location is the virion. The protein resides in the host cytoplasm. Functionally, assembles to form an icosahedral capsid with a T=1 symmetry. In Spiroplasma virus 4 (SpV4), this protein is Capsid protein VP1.